The sequence spans 884 residues: Translation initiation factor IF-2 (884 aa).

Positions proline 58 to glutamate 248 are disordered. Residues valine 66–proline 77 are compositionally biased toward basic residues. Low complexity predominate over residues glutamate 87–glutamate 106. A compositionally biased stretch (basic residues) spans serine 172–alanine 183. A compositionally biased stretch (low complexity) spans aspartate 207 to alanine 223. Basic residues predominate over residues lysine 229–glycine 239. One can recognise a tr-type G domain in the interval lysine 384–lysine 553. The tract at residues glycine 393–threonine 400 is G1. Residue glycine 393–threonine 400 coordinates GTP. The tract at residues glycine 418–histidine 422 is G2. The G3 stretch occupies residues aspartate 439 to glycine 442. GTP contacts are provided by residues aspartate 439–histidine 443 and asparagine 493–aspartate 496. The tract at residues asparagine 493 to aspartate 496 is G4. A G5 region spans residues serine 529 to lysine 531.

It belongs to the TRAFAC class translation factor GTPase superfamily. Classic translation factor GTPase family. IF-2 subfamily.

It is found in the cytoplasm. In terms of biological role, one of the essential components for the initiation of protein synthesis. Protects formylmethionyl-tRNA from spontaneous hydrolysis and promotes its binding to the 30S ribosomal subunits. Also involved in the hydrolysis of GTP during the formation of the 70S ribosomal complex. The protein is Translation initiation factor IF-2 of Desulfosudis oleivorans (strain DSM 6200 / JCM 39069 / Hxd3) (Desulfococcus oleovorans).